Reading from the N-terminus, the 676-residue chain is DNA ligase (676 aa).

Residues 35-39 (DAEYD), 84-85 (SL), and E118 each bind NAD(+). The N6-AMP-lysine intermediate role is filled by K120. The NAD(+) site is built by R141, E176, K284, and K308. Zn(2+)-binding residues include C402, C405, C420, and C426. Positions 595–676 (SYLSLIHGKI…WLQYTQSSEN (82 aa)) constitute a BRCT domain.

The protein belongs to the NAD-dependent DNA ligase family. LigA subfamily. The cofactor is Mg(2+). Mn(2+) serves as cofactor.

The catalysed reaction is NAD(+) + (deoxyribonucleotide)n-3'-hydroxyl + 5'-phospho-(deoxyribonucleotide)m = (deoxyribonucleotide)n+m + AMP + beta-nicotinamide D-nucleotide.. DNA ligase that catalyzes the formation of phosphodiester linkages between 5'-phosphoryl and 3'-hydroxyl groups in double-stranded DNA using NAD as a coenzyme and as the energy source for the reaction. It is essential for DNA replication and repair of damaged DNA. The chain is DNA ligase from Ehrlichia chaffeensis (strain ATCC CRL-10679 / Arkansas).